Consider the following 233-residue polypeptide: Antilisterial bacteriocin subtilosin biosynthesis protein AlbG (233 aa).

6 helical membrane-spanning segments follow: residues 7-27, 46-66, 116-136, 145-165, 176-198, and 203-220; these read FTLL…VQAV, GLLA…LHYV, TYVM…FEIV, TPPA…LFCM, GSLF…MLSF, and LLFL…SFIY.

The protein resides in the cell membrane. Involved in the production of the bacteriocin subtilosin. The protein is Antilisterial bacteriocin subtilosin biosynthesis protein AlbG (albG) of Bacillus subtilis (strain 168).